Reading from the N-terminus, the 158-residue chain is Nascent polypeptide-associated complex subunit beta (158 aa).

Disordered stretches follow at residues M1–L40 and E119–E158. Positions G16–K31 are enriched in basic residues. An NAC-A/B domain is found at G34–V99. Residues D137–N152 are compositionally biased toward acidic residues.

Belongs to the NAC-beta family. As to quaternary structure, part of the nascent polypeptide-associated complex (NAC), consisting of EGD2 and EGD1. NAC associates with ribosomes via EGD1.

It localises to the cytoplasm. Its subcellular location is the nucleus. Functionally, component of the nascent polypeptide-associated complex (NAC), a dynamic component of the ribosomal exit tunnel, protecting the emerging polypeptides from interaction with other cytoplasmic proteins to ensure appropriate nascent protein targeting. The NAC complex also promotes mitochondrial protein import by enhancing productive ribosome interactions with the outer mitochondrial membrane and blocks the inappropriate interaction of ribosomes translating non-secretory nascent polypeptides with translocation sites in the membrane of the endoplasmic reticulum. EGD1 may act as a transcription factor that exert a negative effect on the expression of several genes that are transcribed by RNA polymerase II. The protein is Nascent polypeptide-associated complex subunit beta (EGD1) of Ajellomyces capsulatus (strain NAm1 / WU24) (Darling's disease fungus).